A 234-amino-acid chain; its full sequence is ATP-dependent dethiobiotin synthetase BioD (234 aa).

12-17 (DVGKTI) serves as a coordination point for ATP. Thr-16 is a binding site for Mg(2+). Lys-37 is an active-site residue. A substrate-binding site is contributed by Thr-41. ATP-binding positions include Asp-54 and 115–118 (EGAG). Positions 54 and 115 each coordinate Mg(2+).

This sequence belongs to the dethiobiotin synthetase family. In terms of assembly, homodimer. The cofactor is Mg(2+).

It localises to the cytoplasm. It catalyses the reaction (7R,8S)-7,8-diammoniononanoate + CO2 + ATP = (4R,5S)-dethiobiotin + ADP + phosphate + 3 H(+). Its pathway is cofactor biosynthesis; biotin biosynthesis; biotin from 7,8-diaminononanoate: step 1/2. In terms of biological role, catalyzes a mechanistically unusual reaction, the ATP-dependent insertion of CO2 between the N7 and N8 nitrogen atoms of 7,8-diaminopelargonic acid (DAPA, also called 7,8-diammoniononanoate) to form a ureido ring. This chain is ATP-dependent dethiobiotin synthetase BioD, found in Lysinibacillus sphaericus (strain C3-41).